The following is a 136-amino-acid chain: Small ribosomal subunit protein uS8c (136 aa).

The protein belongs to the universal ribosomal protein uS8 family. In terms of assembly, part of the 30S ribosomal subunit.

Its subcellular location is the plastid. The protein localises to the chloroplast. In terms of biological role, one of the primary rRNA binding proteins, it binds directly to 16S rRNA central domain where it helps coordinate assembly of the platform of the 30S subunit. The chain is Small ribosomal subunit protein uS8c (rps8) from Agrostis stolonifera (Creeping bentgrass).